Consider the following 87-residue polypeptide: LYR motif-containing protein 2 (87 aa).

Residues M1–Q19 constitute a mitochondrion transit peptide.

This sequence belongs to the complex I LYR family.

The protein localises to the mitochondrion. In terms of biological role, involved in efficient integration of the N-module into mitochondrial respiratory chain complex I. The sequence is that of LYR motif-containing protein 2 (lyrm2) from Xenopus tropicalis (Western clawed frog).